Here is a 65-residue protein sequence, read N- to C-terminus: Muscarinic toxin 3 (65 aa).

Cystine bridges form between cysteine 3–cysteine 24, cysteine 17–cysteine 42, cysteine 46–cysteine 57, and cysteine 58–cysteine 63.

It belongs to the three-finger toxin family. Short-chain subfamily. Aminergic toxin sub-subfamily. In terms of tissue distribution, expressed by the venom gland.

The protein resides in the secreted. Functionally, potent antagonist (IC(50)=1-10 nM) of M4 (CHRM4) muscarinic receptors, and CHRM1, ADRA1A, ADRA2A and ADRA2C adrenergic receptors. Also antagonises ADRA1B and ADRA1D adrenergic receptors with a 10-times lower affinity. In Dendroaspis angusticeps (Eastern green mamba), this protein is Muscarinic toxin 3.